A 440-amino-acid polypeptide reads, in one-letter code: Amino acid transporter AVT6D (440 aa).

11 consecutive transmembrane segments (helical) span residues 26 to 46 (FAGA…MAIP), 47 to 67 (AAFK…IAWL), 102 to 122 (AVTV…SIII), 149 to 169 (WNTR…PLVL), 182 to 202 (ISFL…IIAL), 219 to 239 (GGLS…AFTF), 262 to 282 (ISVI…YLLF), 309 to 329 (IVRL…NFSL), 356 to 376 (FPLL…WYFF), 377 to 397 (QFLG…AIVL), and 410 to 430 (IVAS…ISTN).

This sequence belongs to the amino acid/polyamine transporter 2 family. Amino acid/auxin permease (AAAP) (TC 2.A.18.6) subfamily.

The protein localises to the membrane. This is Amino acid transporter AVT6D from Arabidopsis thaliana (Mouse-ear cress).